The chain runs to 94 residues: uncharacterized protein (94 aa).

This is an uncharacterized protein from Homo sapiens (Human).